A 196-amino-acid polypeptide reads, in one-letter code: Oocyte zinc finger protein XlCOF26 (196 aa).

C2H2-type zinc fingers lie at residues 6–28 (YSCT…QKNH), 34–56 (FTCT…QRIH), 62–84 (FTCT…QRIH), 90–112 (FTCT…HKIH), 118–140 (FTCP…QRTH), 146–168 (FTCT…QSTH), and 174–196 (FTCT…QMTH).

This sequence belongs to the krueppel C2H2-type zinc-finger protein family.

The protein resides in the nucleus. May be involved in transcriptional regulation. This is Oocyte zinc finger protein XlCOF26 from Xenopus laevis (African clawed frog).